The primary structure comprises 302 residues: Protoheme IX farnesyltransferase (302 aa).

9 helical membrane-spanning segments follow: residues 28 to 48 (VVAL…PGVP), 50 to 70 (WSVL…AAVV), 95 to 115 (IAPL…MVVL), 122 to 142 (LTAW…TLFL), 150 to 170 (IVIG…AVTG), 176 to 196 (ALLL…ALAI), 221 to 241 (LHIL…FVTG), 243 to 263 (SGGI…QYAV), and 282 to 302 (ITYL…FVPA).

It belongs to the UbiA prenyltransferase family. Protoheme IX farnesyltransferase subfamily.

It is found in the cell inner membrane. The catalysed reaction is heme b + (2E,6E)-farnesyl diphosphate + H2O = Fe(II)-heme o + diphosphate. It participates in porphyrin-containing compound metabolism; heme O biosynthesis; heme O from protoheme: step 1/1. Its function is as follows. Converts heme B (protoheme IX) to heme O by substitution of the vinyl group on carbon 2 of heme B porphyrin ring with a hydroxyethyl farnesyl side group. In Marinobacter nauticus (strain ATCC 700491 / DSM 11845 / VT8) (Marinobacter aquaeolei), this protein is Protoheme IX farnesyltransferase.